The chain runs to 249 residues: Probable phosphatase VV2_1469 (249 aa).

Zn(2+)-binding residues include H8, H10, H16, H41, E74, H102, H132, D194, and H196.

This sequence belongs to the PHP family. Zn(2+) is required as a cofactor.

The polypeptide is Probable phosphatase VV2_1469 (Vibrio vulnificus (strain CMCP6)).